A 148-amino-acid polypeptide reads, in one-letter code: Large ribosomal subunit protein uL11 (148 aa).

The protein belongs to the universal ribosomal protein uL11 family. Part of the ribosomal stalk of the 50S ribosomal subunit. Interacts with L10 and the large rRNA to form the base of the stalk. L10 forms an elongated spine to which L12 dimers bind in a sequential fashion forming a multimeric L10(L12)X complex. In terms of processing, one or more lysine residues are methylated.

Forms part of the ribosomal stalk which helps the ribosome interact with GTP-bound translation factors. The polypeptide is Large ribosomal subunit protein uL11 (Myxococcus xanthus (strain DK1622)).